Reading from the N-terminus, the 252-residue chain is TVP38/TMEM64 family membrane protein Mb1528c (252 aa).

A run of 6 helical transmembrane segments spans residues 32–52, 64–84, 88–108, 149–169, 177–197, and 209–229; these read IVGT…VPVP, LGAW…VPPF, AFTL…IAVV, WLAI…INYA, ILSF…AVVI, and LLIL…VYEI.

This sequence belongs to the TVP38/TMEM64 family.

The protein localises to the cell membrane. In Mycobacterium bovis (strain ATCC BAA-935 / AF2122/97), this protein is TVP38/TMEM64 family membrane protein Mb1528c.